The chain runs to 161 residues: 18.3 kDa class I heat shock protein (161 aa).

The region spanning 48–161 is the sHSP domain; that stretch reads ETAAFANARI…KPQVKAINVY (114 aa).

This sequence belongs to the small heat shock protein (HSP20) family. As to quaternary structure, forms oligomeric structures.

The protein resides in the cytoplasm. This Oxybasis rubra (Red goosefoot) protein is 18.3 kDa class I heat shock protein (HSP18).